The chain runs to 34 residues: Cytochrome b6-f complex subunit 5 (34 aa).

Residues 5 to 25 (LLSGIVLGLVPVTLAGLFVTA) form a helical membrane-spanning segment.

Belongs to the PetG family. In terms of assembly, the 4 large subunits of the cytochrome b6-f complex are cytochrome b6, subunit IV (17 kDa polypeptide, PetD), cytochrome f and the Rieske protein, while the 4 small subunits are PetG, PetL, PetM and PetN. The complex functions as a dimer.

Its subcellular location is the plastid. The protein localises to the chloroplast thylakoid membrane. Functionally, component of the cytochrome b6-f complex, which mediates electron transfer between photosystem II (PSII) and photosystem I (PSI), cyclic electron flow around PSI, and state transitions. PetG is required for either the stability or assembly of the cytochrome b6-f complex. The polypeptide is Cytochrome b6-f complex subunit 5 (Oltmannsiellopsis viridis (Marine flagellate)).